Consider the following 147-residue polypeptide: MTCGKPADYRYGEHTADVLIQAYGCTLEEAFVNAAVALAEVTYSTSKVEPKHSREVEVEYDDLEGLLFKWIDELLYLFDAEKFAISRKIDLKLEKDGGYRIKAVLYGDIYSQEKHGFTGLIVKAMTFHMMEIRQIGDYWMVQYVVDI.

Ca(2+) is bound by residues Asp17, Asp146, and Ile147.

Belongs to the archease family.

Its function is as follows. Activates the tRNA-splicing ligase complex by facilitating the enzymatic turnover of catalytic subunit RtcB. Acts by promoting the guanylylation of RtcB, a key intermediate step in tRNA ligation. Can also alter the NTP specificity of RtcB such that ATP, dGTP or ITP is used efficiently. The sequence is that of Protein archease from Pyrobaculum neutrophilum (strain DSM 2338 / JCM 9278 / NBRC 100436 / V24Sta) (Thermoproteus neutrophilus).